The primary structure comprises 361 residues: MSRIQRCFKSLASAGFFRTVEDNKLELLSHGREYAKLLQQHWTRLRPLAAHLGATKEPINPVNIQRFSFPQSQQFRNNFQKLVKDHPRKAKCPTLLKHQSTCSGPTSNSLFGIKGPTLHLTTDFLVEPHRALEHFYNMQRESKIWWMRLSSNPSRYRIVPCDLAEDLNPNDYQAIDIRTSYGDAGEVTVEQLSLVRIVDDKDFRLPDARTGEIVQPTVIRSVIELETTTCALLLDGCDHGRDSQSLLLHRVLAPYQCGIACVESDSELSADLSDLCQHLKHVLNHAGLRLSEGDGIRTTKNASHLAEHLLETDMLGIPYTLVINEQTLRNGLMQLRSRDTRLAETIHISDVPDYLLNIFKN.

A mitochondrion-targeting transit peptide spans 1 to 18 (MSRIQRCFKSLASAGFFR).

As to quaternary structure, component of the DNA polymerase gamma complex consisting of two subunits: the catalytic subunit DNApol-gamma/DNApolG1 and the accessory subunit PolG2/DNApol-gamma35. In terms of tissue distribution, expressed in ovaries (at protein level).

The protein resides in the mitochondrion. In terms of biological role, as accessory component of the DNA polymerase gamma complex is involved in the replication of mitochondrial DNA. Does not bind DNA. Essential for mitochondrial DNA maintenance and larval development. This chain is DNA polymerase subunit gamma-2, mitochondrial, found in Drosophila melanogaster (Fruit fly).